We begin with the raw amino-acid sequence, 809 residues long: MSVRTKVLGLVDVMMRVPPVMVIDEILKMDMGMQSWLYPDKDKASGALATPTEAPAVPSGQDPFTSIKELFSHMTTSAQSVLEQSIEKASEAAKTHGMLSSGFNSLMNELSKDQTLADVLSTTTVKFVLCVFAFLSAACIFMLWTRHLVMVYMFLTSLGLTFLSYWSNVSALALTERSPSMVEDLMSLNTTRLLDSGGVVMSLAPHLMAQWFMGMLFAYIHLGPRFEHVQRSMPIIFASPILLAMLPLPAKVVQHLPVVAVFTPIILTKITLMQSAMEASRTVYNGYQYAMNFVSNFGLSALIENEWQRLNVPNVLRVFWTIRLIQGGYALATTESDEPLDLMTATQKLLVDGCETMTAVLGMTGVISMFCHYIGRGFQWYLLTYDDEEKSLGTVSAVLFYILALQTGLTSLSPDKRFIRLCRNLCLLMTALLHFLHNIVSPILMSLSAARNPSRKRHVRALSVCAFLVVLSVSLLYHLWSQQSISTWLLAVTAFSVEVVVKVLVSLATYTLFLLDARRQFFWEKLDDYLYYVRAFGNSVEFCFGILLFINGAWILIFESAQNATGGGIRAIMMCIHAYFNIWCEARAGWSVFMKRRSAVHKISALPEATPAQLQAFDDVCAICYQEMYSAKITRCRHFFHGVCLRKWLYVQDRCPLCHEIMMYTDKADENAPEAEPAPAAQAEQPMRIYPRDDANNAAAQRRSPERAPVEASEQAPATSSSSAAATIGAEAVSAIVESAAAVGEARSLVSVASSSSATHRISASGSSDSSYMTASAQSPPPTATSAAAVATAAASNTTHMFRMSQDQQ.

Helical transmembrane passes span 124-144, 147-167, 200-220, 233-253, 256-276, 350-370, 392-412, 425-445, 461-481, 488-508, and 539-559; these read TVKFVLCVFAFLSAACIFMLW, HLVMVYMFLTSLGLTFLSYWS, VMSLAPHLMAQWFMGMLFAYI, MPIIFASPILLAMLPLPAKVV, LPVVAVFTPIILTKITLMQSA, LVDGCETMTAVLGMTGVISMF, LGTVSAVLFYILALQTGLTSL, LCLLMTALLHFLHNIVSPILM, ALSVCAFLVVLSVSLLYHLWS, WLLAVTAFSVEVVVKVLVSLA, and SVEFCFGILLFINGAWILIFE. Residues 621 to 659 form an RING-type; atypical zinc finger; the sequence is CAICYQEMYSAKITRCRHFFHGVCLRKWLYVQDRCPLCH. 2 disordered regions span residues 696–724 and 752–788; these read NNAAAQRRSPERAPVEASEQAPATSSSSA and VASSSSATHRISASGSSDSSYMTASAQSPPPTATSAA. Residues 711-724 show a composition bias toward low complexity; sequence EASEQAPATSSSSA.

As to quaternary structure, interacts with VHL. Interacts with the MPN domain of CSN5. Interacts with EIF3F and EIF3H.

It localises to the endoplasmic reticulum membrane. Its function is as follows. Plays a role in growth inhibition that is dependent upon COP9 signalosome subunits CSN5 and CSN6. May modulate signalosome levels or compartmentalization. Probably functions in the same or a related pathway to VHL during early midline development. This Drosophila melanogaster (Fruit fly) protein is Protein TRC8 homolog.